The chain runs to 431 residues: Intraflagellar transport protein 38 (431 aa).

A coiled-coil region spans residues 177 to 218 (SAAVQQRIKNLAAECNTLQEEVTTNKREKAKLEEQITQKKQS). Residues 346-431 (INTNAEIPDD…EELDPDNIEF (86 aa)) form a disordered region. Acidic residues predominate over residues 352-370 (IPDDESYSYSYEEEEEEEQ). The segment covering 384-405 (PETHSNGEKHRGLDELSHKSNE) has biased composition (basic and acidic residues). Residues 420–431 (GGEELDPDNIEF) are compositionally biased toward acidic residues.

Belongs to the CLUAP1 family.

The protein resides in the cell projection. It is found in the cilium. Its subcellular location is the flagellum. The protein localises to the cytoplasm. It localises to the cytoskeleton. The protein resides in the flagellum axoneme. It is found in the flagellum basal body. Its function is as follows. Component of the intraflagellar transport complex B (IFT-B) involved in flagellar assembly. This is Intraflagellar transport protein 38 from Giardia intestinalis (strain ATCC 50803 / WB clone C6) (Giardia lamblia).